The following is a 471-amino-acid chain: COP9 signalosome complex subunit 1 (471 aa).

The 163-residue stretch at 249-411 (CFLLASFDHC…KILYARDVDQ (163 aa)) folds into the PCI domain. The tract at residues 445 to 471 (HVKSPPREGSQGELTPANSQSRMSTNM) is disordered. Phosphoserine occurs at positions 448 and 454. The segment covering 456–471 (GELTPANSQSRMSTNM) has biased composition (polar residues). Threonine 459 carries the phosphothreonine modification. Serine 463 bears the Phosphoserine mark.

This sequence belongs to the CSN1 family. Component of the CSN complex, composed of COPS1/GPS1, COPS2, COPS3, COPS4, COPS5, COPS6, COPS7 (COPS7A or COPS7B), COPS8 and COPS9. In the complex, it probably interacts directly with COPS2, COPS3, COPS4 and COPS5. Interacts directly with inositol kinase ITPK1. Interacts with CAPN8. Interacts with USP48. Interacts with ASB4; this interaction negatively regulates GPS1. In terms of tissue distribution, expressed in the base region of the oxyntic and pyloric mucosae.

It is found in the cytoplasm. The protein localises to the nucleus. Its function is as follows. Essential component of the COP9 signalosome complex (CSN), a complex involved in various cellular and developmental processes. The CSN complex is an essential regulator of the ubiquitin (Ubl) conjugation pathway by mediating the deneddylation of the cullin subunits of SCF-type E3 ligase complexes, leading to decrease the Ubl ligase activity of SCF-type complexes such as SCF, CSA or DDB2. The complex is also involved in phosphorylation of p53/TP53, c-jun/JUN, IkappaBalpha/NFKBIA, ITPK1 and IRF8/ICSBP, possibly via its association with CK2 and PKD kinases. CSN-dependent phosphorylation of TP53 and JUN promotes and protects degradation by the Ubl system, respectively. Suppresses G-protein- and mitogen-activated protein kinase-mediated signal transduction. The protein is COP9 signalosome complex subunit 1 (Gps1) of Mus musculus (Mouse).